Consider the following 95-residue polypeptide: Aspartyl/glutamyl-tRNA(Asn/Gln) amidotransferase subunit C (95 aa).

This sequence belongs to the GatC family. Heterotrimer of A, B and C subunits.

It catalyses the reaction L-glutamyl-tRNA(Gln) + L-glutamine + ATP + H2O = L-glutaminyl-tRNA(Gln) + L-glutamate + ADP + phosphate + H(+). The catalysed reaction is L-aspartyl-tRNA(Asn) + L-glutamine + ATP + H2O = L-asparaginyl-tRNA(Asn) + L-glutamate + ADP + phosphate + 2 H(+). Functionally, allows the formation of correctly charged Asn-tRNA(Asn) or Gln-tRNA(Gln) through the transamidation of misacylated Asp-tRNA(Asn) or Glu-tRNA(Gln) in organisms which lack either or both of asparaginyl-tRNA or glutaminyl-tRNA synthetases. The reaction takes place in the presence of glutamine and ATP through an activated phospho-Asp-tRNA(Asn) or phospho-Glu-tRNA(Gln). The sequence is that of Aspartyl/glutamyl-tRNA(Asn/Gln) amidotransferase subunit C from Acidiphilium cryptum (strain JF-5).